The sequence spans 87 residues: Large ribosomal subunit protein bL31B (87 aa).

It belongs to the bacterial ribosomal protein bL31 family. Type B subfamily. Part of the 50S ribosomal subunit.

In Burkholderia pseudomallei (strain 1106a), this protein is Large ribosomal subunit protein bL31B.